The primary structure comprises 172 residues: Shikimate kinase (172 aa).

17 to 22 (GTGKST) is a binding site for ATP. A Mg(2+)-binding site is contributed by serine 21. Residues aspartate 39, arginine 63, and glycine 84 each contribute to the substrate site. Arginine 122 is an ATP binding site. Arginine 140 contacts substrate.

The protein belongs to the shikimate kinase family. As to quaternary structure, monomer. Requires Mg(2+) as cofactor.

It is found in the cytoplasm. The enzyme catalyses shikimate + ATP = 3-phosphoshikimate + ADP + H(+). It participates in metabolic intermediate biosynthesis; chorismate biosynthesis; chorismate from D-erythrose 4-phosphate and phosphoenolpyruvate: step 5/7. Functionally, catalyzes the specific phosphorylation of the 3-hydroxyl group of shikimic acid using ATP as a cosubstrate. This chain is Shikimate kinase, found in Staphylococcus haemolyticus (strain JCSC1435).